Consider the following 224-residue polypeptide: MTKKICIAIDGPAAAGKSTVAKIVAKKLRFVYIDTGAMYRAVTYIALKNNIAYEDEKAIAALLQKTVIRFEPGEVQQVFVGSENVTEVIRSIEVTNHVSIVAAHPSIREALQERQQVFATEGGIVMDGRDIGTAVLPNAELKIFLLASVEERAERRYKENMAKGFTGDLDQLKKEIEERDHLDYTRTHSPLKKADDAIEVDTTSMSIDQVANKILSLAELKINN.

Position 11–19 (11–19) interacts with ATP; that stretch reads GPAAAGKST.

This sequence belongs to the cytidylate kinase family. Type 1 subfamily.

It localises to the cytoplasm. It carries out the reaction CMP + ATP = CDP + ADP. It catalyses the reaction dCMP + ATP = dCDP + ADP. The sequence is that of Cytidylate kinase from Listeria monocytogenes serovar 1/2a (strain ATCC BAA-679 / EGD-e).